Here is an 867-residue protein sequence, read N- to C-terminus: MEIGTRYDPKNIEMKWYKHWLEKKYFTPRGAGPKYSIVIPPPNITGKIHMGHALNITIQDILSRYKRMKGFDVLWLPGEDHAGIATQTAVERYLSTQGKSRRDFSRDEFLNIVWNWANKYRQEIKNQIMSIGASVDWTRERFTLDEGLSKAVRKVFVDMYKKGLIYKGKYIVNWCHRCGTVLSDEEVDYHEEEGALYHIKYPIKGEDDYIIIATTRPETMLGDTAVAVHPSDERYRKYVGKIAILPLVGREIPVIADNYVDPSFGTGALKVTPAHDTNDYLIGQRHNLPFVDIFDENIVINENGGKFKGMTAEQARKAVVEELEAQGYLVKIEKMKHSVGRCYRCDTVVEPRLMDQWFVSMKPLAKRAIEAVENGEVTFIPDRWKKVYLNWMYEIRDWCISRQLWWGHRIPVWQCQDCGHYNVSENEPVKCEKCGSTNLKQDEDVLDTWFSSALWPFSTMGWPEKTPDLERYYPTDVLVTGFDIIFFWVARMIMMGYEFMDEKPFKEVYIHQLVRDKYGRKMSKSLGNGIDPLEVIDEYGADPMRFTLAILAAQGRDLKLDVRFFDTYKKFANKIWNATRFVLMNLEDFEKVDIKLSKLKLSDKWILSRLQKTIQKISEALDSYDFNIAANEIYNFFWDELCDWYIEAVKNRLKTEERKVVQNVLVYVLDMSLRLLHPFMPFLTEELWTKLPTSGESIVVAQWPEIEENFIDENSEKRFMQLMNIIRGIRNIRAEVNVPQSTKVKTFVKGTLTDEEQEYIKFLGNVESIEFVEKRPELSATAYISLENEVYVSLGTLIDVKSEVERLRKKVEKLKSDMEKFAKKLEDENFLKNAPEDIVEETKEKQRLFQEQIARIEQIISDLEAKA.

A 'HIGH' region motif is present at residues 42-52; it reads PNITGKIHMGH. The short motif at 521 to 525 is the 'KMSKS' region element; sequence KMSKS. ATP is bound at residue Lys524. A coiled-coil region spans residues 794-867; sequence LGTLIDVKSE…QIISDLEAKA (74 aa).

The protein belongs to the class-I aminoacyl-tRNA synthetase family. ValS type 1 subfamily. Monomer.

It localises to the cytoplasm. The enzyme catalyses tRNA(Val) + L-valine + ATP = L-valyl-tRNA(Val) + AMP + diphosphate. Its function is as follows. Catalyzes the attachment of valine to tRNA(Val). As ValRS can inadvertently accommodate and process structurally similar amino acids such as threonine, to avoid such errors, it has a 'posttransfer' editing activity that hydrolyzes mischarged Thr-tRNA(Val) in a tRNA-dependent manner. This Fervidobacterium nodosum (strain ATCC 35602 / DSM 5306 / Rt17-B1) protein is Valine--tRNA ligase.